Reading from the N-terminus, the 218-residue chain is Thiopurine S-methyltransferase (218 aa).

Residues Trp10, Leu45, Glu66, and Arg123 each contribute to the S-adenosyl-L-methionine site.

The protein belongs to the class I-like SAM-binding methyltransferase superfamily. TPMT family.

The protein localises to the cytoplasm. It carries out the reaction S-adenosyl-L-methionine + a thiopurine = S-adenosyl-L-homocysteine + a thiopurine S-methylether.. The sequence is that of Thiopurine S-methyltransferase from Shewanella putrefaciens (strain CN-32 / ATCC BAA-453).